The sequence spans 258 residues: MKWKLRKSLKIANSVAFTYMVRFPDKSFYIGFKKFKTIYGKDTNWKEYNSSSKLVKEKLKDYKAKWIILQVFDSYESALKHEEMLIRKYFNNEFILNKSIGGYKFNKYPDSEEHKQKLSNAHKGKILSLKHKDKIREKLIEHYKNNSRSEAHVKNNIGSRTAKKTVSIALKSGNKFRSFKSAAKFLKCSEEQVSNHPNVIDIKITIHPVPEYVKINDNIYKSFVDAAKDLKLHPSRIKDLCLDDNYPNYIVSYKRVEK.

Positions 14 to 96 constitute a GIY-YIG domain; it reads SVAFTYMVRF…RKYFNNEFIL (83 aa).

In terms of biological role, this endonuclease is specific to the nrdD gene splice junction and is involved in intron homing. The sequence is that of Intron-associated endonuclease 2 (ITEVIIR) from Escherichia coli (Bacteriophage T4).